We begin with the raw amino-acid sequence, 621 residues long: Chaperone protein HscA homolog (621 aa).

The protein belongs to the heat shock protein 70 family.

Functionally, chaperone involved in the maturation of iron-sulfur cluster-containing proteins. Has a low intrinsic ATPase activity which is markedly stimulated by HscB. The protein is Chaperone protein HscA homolog of Polynucleobacter necessarius subsp. necessarius (strain STIR1).